The primary structure comprises 503 residues: MLDLTYEAPKPKVIAGAKHDWELVIGMEIHAQVSSNAKLFSGASTTFGAEPNSNVSFVDCAMPGMLPVINEFCVAQAVRTGLGLKAQINLVSAFDRKNYFYPDLPQGYQISQLYHPIVGEGEVLVELAPGIARLVRIERIHLEQDAGKSIHDMDPNLSFVDFNRTGVALMEIVSRPDIRGPEEAAAYVAKLRQILRYLGTCDGNMQNGNLRADVNVSVCRPGQYEKYQETQDFSHLGTRCEIKNMNSMRFIQQAIDYEARRQIAILEDGGKVVQETRLYDPDKGETRSMRSKEEAHDYRYFPDPDLLPLEIEQGWVDEIAASMPELPDAKKARFMADYGVTDYDANVLTAELDAAAYFEEVARGRDGKQAANWVINELFGRLNKQGLTIADTPVKAGQLGGVLDLIASGEISGKMAKDLFEILWTEGGDPAEVAAARGMKQVTDTGAIETAVDEIIAANPAQVEKAKANPKLAGWFVGQVIKATGGKANPAAVNQIVAQKLGL.

Belongs to the GatB/GatE family. GatB subfamily. Heterotrimer of A, B and C subunits.

The catalysed reaction is L-glutamyl-tRNA(Gln) + L-glutamine + ATP + H2O = L-glutaminyl-tRNA(Gln) + L-glutamate + ADP + phosphate + H(+). The enzyme catalyses L-aspartyl-tRNA(Asn) + L-glutamine + ATP + H2O = L-asparaginyl-tRNA(Asn) + L-glutamate + ADP + phosphate + 2 H(+). Its function is as follows. Allows the formation of correctly charged Asn-tRNA(Asn) or Gln-tRNA(Gln) through the transamidation of misacylated Asp-tRNA(Asn) or Glu-tRNA(Gln) in organisms which lack either or both of asparaginyl-tRNA or glutaminyl-tRNA synthetases. The reaction takes place in the presence of glutamine and ATP through an activated phospho-Asp-tRNA(Asn) or phospho-Glu-tRNA(Gln). The sequence is that of Aspartyl/glutamyl-tRNA(Asn/Gln) amidotransferase subunit B from Cereibacter sphaeroides (strain ATCC 17023 / DSM 158 / JCM 6121 / CCUG 31486 / LMG 2827 / NBRC 12203 / NCIMB 8253 / ATH 2.4.1.) (Rhodobacter sphaeroides).